The following is a 447-amino-acid chain: N-succinylarginine dihydrolase (447 aa).

Substrate-binding positions include 19–28, asparagine 110, and 137–138; these read AGLSFGNEAS and HR. Glutamate 174 is an active-site residue. Arginine 212 provides a ligand contact to substrate. Histidine 248 is a catalytic residue. Positions 250 and 359 each coordinate substrate. Cysteine 365 acts as the Nucleophile in catalysis.

The protein belongs to the succinylarginine dihydrolase family. As to quaternary structure, homodimer.

It carries out the reaction N(2)-succinyl-L-arginine + 2 H2O + 2 H(+) = N(2)-succinyl-L-ornithine + 2 NH4(+) + CO2. It functions in the pathway amino-acid degradation; L-arginine degradation via AST pathway; L-glutamate and succinate from L-arginine: step 2/5. Its function is as follows. Catalyzes the hydrolysis of N(2)-succinylarginine into N(2)-succinylornithine, ammonia and CO(2). This Citrobacter koseri (strain ATCC BAA-895 / CDC 4225-83 / SGSC4696) protein is N-succinylarginine dihydrolase.